We begin with the raw amino-acid sequence, 400 residues long: D-alanyl-D-alanine carboxypeptidase DacC (400 aa).

Residues 1–27 (MTQYSSLLRGLAAGSAFLFLFAPTAFA) form the signal peptide. Residue serine 66 is the Acyl-ester intermediate of the active site. The active-site Proton acceptor is lysine 69. The active site involves serine 132. Residue lysine 235 coordinates substrate. The segment at 383 to 400 (VWDFVMMKFHQWFGSWFS) is required for inner membrane binding.

It belongs to the peptidase S11 family.

Its subcellular location is the cell inner membrane. The catalysed reaction is Preferential cleavage: (Ac)2-L-Lys-D-Ala-|-D-Ala. Also transpeptidation of peptidyl-alanyl moieties that are N-acyl substituents of D-alanine.. The protein operates within cell wall biogenesis; peptidoglycan biosynthesis. In terms of biological role, removes C-terminal D-alanyl residues from sugar-peptide cell wall precursors. In Escherichia coli (strain K12), this protein is D-alanyl-D-alanine carboxypeptidase DacC (dacC).